A 342-amino-acid chain; its full sequence is Glycerol-1-phosphate dehydrogenase [NAD(P)+] (342 aa).

Residues 84-88 and 106-109 each bind NAD(+); these read GRPID and TAAS. Aspartate 111 serves as a coordination point for substrate. Serine 115 provides a ligand contact to NAD(+). A substrate-binding site is contributed by aspartate 160. Aspartate 160 and histidine 241 together coordinate Zn(2+). Substrate is bound at residue histidine 245. Residue histidine 260 coordinates Zn(2+).

It belongs to the glycerol-1-phosphate dehydrogenase family. In terms of assembly, homodimer. The cofactor is Zn(2+).

It is found in the cytoplasm. The enzyme catalyses sn-glycerol 1-phosphate + NAD(+) = dihydroxyacetone phosphate + NADH + H(+). It catalyses the reaction sn-glycerol 1-phosphate + NADP(+) = dihydroxyacetone phosphate + NADPH + H(+). It participates in membrane lipid metabolism; glycerophospholipid metabolism. Catalyzes the NAD(P)H-dependent reduction of dihydroxyacetonephosphate (DHAP or glycerone phosphate) to glycerol 1-phosphate (G1P). The G1P thus generated is used as the glycerophosphate backbone of phospholipids in the cellular membranes of Archaea. This chain is Glycerol-1-phosphate dehydrogenase [NAD(P)+], found in Pyrobaculum aerophilum (strain ATCC 51768 / DSM 7523 / JCM 9630 / CIP 104966 / NBRC 100827 / IM2).